Consider the following 1066-residue polypeptide: Carbamoyl phosphate synthase large chain (1066 aa).

Residues 1 to 401 (MPKNNNIKKV…ALMKAVRSLE (401 aa)) are carboxyphosphate synthetic domain. ATP-binding residues include Arg129, Arg169, Gly175, Gly176, Arg208, Ile210, Glu215, Gly241, Val242, His243, Gln284, and Glu298. Residues 133 to 327 (KNTMEKIGEP…IAKVAAKIAL (195 aa)) enclose the ATP-grasp 1 domain. Mg(2+)-binding residues include Gln284, Glu298, and Asn300. Residues Gln284, Glu298, and Asn300 each contribute to the Mn(2+) site. Residues 402 to 547 (QNIYSMNYGD…YSCFDSENEV (146 aa)) are oligomerization domain. The segment at 548–931 (DATKTKKKVL…ALYKAFLGAG (384 aa)) is carbamoyl phosphate synthetic domain. The 191-residue stretch at 673–863 (DEILEKCCIP…IVSLASKAVL (191 aa)) folds into the ATP-grasp 2 domain. ATP contacts are provided by Arg709, Lys748, Leu750, Glu754, Gly779, Ile780, His781, Ser782, Gln822, and Glu834. Mg(2+) is bound by residues Gln822, Glu834, and Asn836. Positions 822, 834, and 836 each coordinate Mn(2+). One can recognise an MGS-like domain in the interval 932-1066 (INLPKHKKMI…ELSLIDIARI (135 aa)). Residues 932-1066 (INLPKHKKMI…ELSLIDIARI (135 aa)) form an allosteric domain region.

Belongs to the CarB family. As to quaternary structure, composed of two chains; the small (or glutamine) chain promotes the hydrolysis of glutamine to ammonia, which is used by the large (or ammonia) chain to synthesize carbamoyl phosphate. Tetramer of heterodimers (alpha,beta)4. The cofactor is Mg(2+). Mn(2+) serves as cofactor.

It catalyses the reaction hydrogencarbonate + L-glutamine + 2 ATP + H2O = carbamoyl phosphate + L-glutamate + 2 ADP + phosphate + 2 H(+). The catalysed reaction is hydrogencarbonate + NH4(+) + 2 ATP = carbamoyl phosphate + 2 ADP + phosphate + 2 H(+). Its pathway is amino-acid biosynthesis; L-arginine biosynthesis; carbamoyl phosphate from bicarbonate: step 1/1. It participates in pyrimidine metabolism; UMP biosynthesis via de novo pathway; (S)-dihydroorotate from bicarbonate: step 1/3. In terms of biological role, large subunit of the glutamine-dependent carbamoyl phosphate synthetase (CPSase). CPSase catalyzes the formation of carbamoyl phosphate from the ammonia moiety of glutamine, carbonate, and phosphate donated by ATP, constituting the first step of 2 biosynthetic pathways, one leading to arginine and/or urea and the other to pyrimidine nucleotides. The large subunit (synthetase) binds the substrates ammonia (free or transferred from glutamine from the small subunit), hydrogencarbonate and ATP and carries out an ATP-coupled ligase reaction, activating hydrogencarbonate by forming carboxy phosphate which reacts with ammonia to form carbamoyl phosphate. The protein is Carbamoyl phosphate synthase large chain of Lachnoclostridium phytofermentans (strain ATCC 700394 / DSM 18823 / ISDg) (Clostridium phytofermentans).